The chain runs to 207 residues: Cytochrome c oxidase subunit 3 (207 aa).

5 consecutive transmembrane segments (helical) span residues 28 to 48, 70 to 90, 102 to 122, 144 to 164, and 186 to 206; these read FLGF…LFAT, VVFM…YAIY, LWFG…IYEF, LVGT…TLMI, and WHFI…MGMV.

The protein belongs to the cytochrome c oxidase subunit 3 family.

Its subcellular location is the cell membrane. The catalysed reaction is 4 Fe(II)-[cytochrome c] + O2 + 8 H(+)(in) = 4 Fe(III)-[cytochrome c] + 2 H2O + 4 H(+)(out). The chain is Cytochrome c oxidase subunit 3 (ctaE) from Bacillus sp. (strain PS3).